Reading from the N-terminus, the 326-residue chain is Beta-ketoacyl-[acyl-carrier-protein] synthase III (326 aa).

Catalysis depends on residues cysteine 111 and histidine 253. Residues 254-258 (QANSR) are ACP-binding. The active site involves asparagine 283.

The protein belongs to the thiolase-like superfamily. FabH family. Homodimer.

It localises to the cytoplasm. It catalyses the reaction malonyl-[ACP] + acetyl-CoA + H(+) = 3-oxobutanoyl-[ACP] + CO2 + CoA. Its pathway is lipid metabolism; fatty acid biosynthesis. In terms of biological role, catalyzes the condensation reaction of fatty acid synthesis by the addition to an acyl acceptor of two carbons from malonyl-ACP. Catalyzes the first condensation reaction which initiates fatty acid synthesis and may therefore play a role in governing the total rate of fatty acid production. Possesses both acetoacetyl-ACP synthase and acetyl transacylase activities. Its substrate specificity determines the biosynthesis of branched-chain and/or straight-chain of fatty acids. This is Beta-ketoacyl-[acyl-carrier-protein] synthase III from Latilactobacillus sakei subsp. sakei (strain 23K) (Lactobacillus sakei subsp. sakei).